The primary structure comprises 146 residues: Ribonuclease H (146 aa).

One can recognise an RNase H type-1 domain in the interval 1 to 143; the sequence is MQKKIIVYTD…CDELARQAIK (143 aa). Residues Asp-10, Glu-48, Asp-70, and Asp-135 each contribute to the Mg(2+) site.

It belongs to the RNase H family. In terms of assembly, monomer. Mg(2+) is required as a cofactor.

It localises to the cytoplasm. It carries out the reaction Endonucleolytic cleavage to 5'-phosphomonoester.. In terms of biological role, endonuclease that specifically degrades the RNA of RNA-DNA hybrids. The protein is Ribonuclease H of Chlorobium phaeobacteroides (strain DSM 266 / SMG 266 / 2430).